We begin with the raw amino-acid sequence, 313 residues long: Olfactory receptor 10K1 (313 aa).

The Extracellular portion of the chain corresponds to 1 to 25 (MEQVNKTVVREFVVLGFSSLARLQQ). The N-linked (GlcNAc...) asparagine glycan is linked to asparagine 5. A helical transmembrane segment spans residues 26-46 (LLFVIFLLLYLFTLGTNAIII). Residues 47–54 (STIVLDRA) are Cytoplasmic-facing. The helical transmembrane segment at 55 to 75 (LHTPMYFFLAILSCSEICYTF) threads the bilayer. Over 76–99 (VIVPKMLVDLLSQKKTISFLGCAI) the chain is Extracellular. Residues 100–120 (QMFSFLFFGSSHSFLLAAMGY) form a helical membrane-spanning segment. Residues 121-139 (DRYMAICNPLRYSVLMGHG) are Cytoplasmic-facing. The helical transmembrane segment at 140-160 (VCMGLMAAACACGFTVSLVTT) threads the bilayer. The Extracellular portion of the chain corresponds to 161-197 (SLVFHLPFHSSNQLHHFFCDISPVLKLASQHSGFSQL). The chain crosses the membrane as a helical span at residues 198-217 (VIFMLGVFALVIPLLLILVS). Over 218 to 237 (YIRIISAILKIPSSVGRYKT) the chain is Cytoplasmic. The helical transmembrane segment at 238–258 (FSTCASHLIVVTVHYSCASFI) threads the bilayer. The Extracellular segment spans residues 259 to 271 (YLRPKTNYTSSQD). N-linked (GlcNAc...) asparagine glycosylation is present at asparagine 265. The chain crosses the membrane as a helical span at residues 272-292 (TLISVSYTILTPLFNPMIYSL). The Cytoplasmic portion of the chain corresponds to 293 to 313 (RNKEFKSALRRTIGQTFYPLS).

This sequence belongs to the G-protein coupled receptor 1 family.

Its subcellular location is the cell membrane. In terms of biological role, odorant receptor. In Homo sapiens (Human), this protein is Olfactory receptor 10K1 (OR10K1).